The primary structure comprises 979 residues: DNA ligase 4 (979 aa).

Residues 1-39 (MDSDEIMPDEEHPNVPVGDEESDIDEKYPNRPRNHSPTL) are disordered. ATP contacts are provided by Glu-320, Lys-322, Leu-323, Arg-327, Glu-389, Phe-430, Glu-490, Lys-495, Lys-512, and Lys-514. Lys-322 acts as the N6-AMP-lysine intermediate in catalysis. Residue Glu-389 participates in Mg(2+) binding. Mg(2+) is bound at residue Glu-490. BRCT domains lie at 721 to 814 (PSGH…PDFL) and 867 to 965 (LQES…RFQP).

The protein belongs to the ATP-dependent DNA ligase family. Mg(2+) serves as cofactor.

The protein resides in the nucleus. The catalysed reaction is ATP + (deoxyribonucleotide)n-3'-hydroxyl + 5'-phospho-(deoxyribonucleotide)m = (deoxyribonucleotide)n+m + AMP + diphosphate.. Its function is as follows. DNA ligase involved in DNA non-homologous end joining (NHEJ); required for double-strand break (DSB) repair. This is DNA ligase 4 (lig4) from Aspergillus fumigatus (strain ATCC MYA-4609 / CBS 101355 / FGSC A1100 / Af293) (Neosartorya fumigata).